A 436-amino-acid chain; its full sequence is Mannitol-binding protein (436 aa).

The first 22 residues, 1-22, serve as a signal peptide directing secretion; sequence MNDSIKACLAAACLALPLLAQG.

This sequence belongs to the bacterial solute-binding protein 1 family.

It localises to the periplasm. Functionally, binds mannitol with high affinity. This chain is Mannitol-binding protein, found in Pseudomonas aeruginosa (strain ATCC 15692 / DSM 22644 / CIP 104116 / JCM 14847 / LMG 12228 / 1C / PRS 101 / PAO1).